The following is a 537-amino-acid chain: Glutamate--tRNA ligase (537 aa).

The short motif at 9-19 is the 'HIGH' region element; the sequence is PSPTGLQHIGG. Residues Cys-125, Cys-127, Cys-152, and Glu-154 each coordinate Zn(2+). The 'KMSKS' region motif lies at 270–274; that stretch reads KLSKR. Lys-273 is a binding site for ATP.

Belongs to the class-I aminoacyl-tRNA synthetase family. Glutamate--tRNA ligase type 1 subfamily. Monomer. Requires Zn(2+) as cofactor.

Its subcellular location is the cytoplasm. It catalyses the reaction tRNA(Glu) + L-glutamate + ATP = L-glutamyl-tRNA(Glu) + AMP + diphosphate. Functionally, catalyzes the attachment of glutamate to tRNA(Glu) in a two-step reaction: glutamate is first activated by ATP to form Glu-AMP and then transferred to the acceptor end of tRNA(Glu). The polypeptide is Glutamate--tRNA ligase (Treponema pallidum (strain Nichols)).